Reading from the N-terminus, the 347-residue chain is Selenide, water dikinase (347 aa).

Cys-17 is a catalytic residue. Residues Lys-20 and 48-50 (TRD) contribute to the ATP site. Position 51 (Asp-51) interacts with Mg(2+). ATP contacts are provided by residues Asp-68, Asp-91, and 139 to 141 (GHS). Residue Asp-91 participates in Mg(2+) binding. Mg(2+) is bound at residue Asp-227.

This sequence belongs to the selenophosphate synthase 1 family. Class I subfamily. In terms of assembly, homodimer. It depends on Mg(2+) as a cofactor.

It carries out the reaction hydrogenselenide + ATP + H2O = selenophosphate + AMP + phosphate + 2 H(+). Functionally, synthesizes selenophosphate from selenide and ATP. In Salmonella typhimurium (strain LT2 / SGSC1412 / ATCC 700720), this protein is Selenide, water dikinase.